The chain runs to 634 residues: Chaperone protein DnaK (634 aa).

Thr-193 is subject to Phosphothreonine; by autocatalysis. Positions Gly-597–Lys-634 are disordered. The span at Asn-600–Asn-613 shows a compositional bias: low complexity. The segment covering Glu-616–Lys-634 has biased composition (basic and acidic residues).

Belongs to the heat shock protein 70 family.

Its function is as follows. Acts as a chaperone. In Ehrlichia canis (strain Jake), this protein is Chaperone protein DnaK.